A 263-amino-acid chain; its full sequence is Palmitoyltransferase ZDHHC22 (263 aa).

Residues 1-9 (MLALRLLNV) are Cytoplasmic-facing. Residues 10–30 (VAPAYFLCISLVTFVLQLFLF) traverse the membrane as a helical segment. At 31 to 47 (LPSMREDPTATPLFSPA) the chain is on the lumenal side. The chain crosses the membrane as a helical span at residues 48–68 (VLHGALFLFLSANALGNYILV). At 69 to 125 (VQNSPDDLGACQGTSSQRPQRPPPSTHFCRVCARVTLRHDHHCFFTGNCIGSRNMRN) the chain is on the cytoplasmic side. In terms of domain architecture, DHHC spans 91 to 131 (PPSTHFCRVCARVTLRHDHHCFFTGNCIGSRNMRNFILFCL). Cys-111 (S-palmitoyl cysteine intermediate) is an active-site residue. 2 helical membrane-spanning segments follow: residues 126 to 146 (FILFCLYTSLACLYSMVAGVA) and 147 to 167 (YISAVLSISFAHPLAFLTLLP). Over 168–182 (TSISQFFSGAVLGSD) the chain is Cytoplasmic. A helical transmembrane segment spans residues 183 to 203 (MFVILMLYLWFAVGLACAGFC). Residues 204-263 (CHQLLLILRGQTRYQVRKGVAVRARPWRKNLQEVFGKRWLLGLLVPMFNVGTESSKQQDK) lie on the Lumenal side of the membrane.

This sequence belongs to the DHHC palmitoyltransferase family. In terms of assembly, interacts with CNN3.

It is found in the endoplasmic reticulum membrane. The protein resides in the golgi apparatus membrane. It carries out the reaction L-cysteinyl-[protein] + hexadecanoyl-CoA = S-hexadecanoyl-L-cysteinyl-[protein] + CoA. In terms of biological role, palmitoyltransferase that could catalyze the addition of palmitate onto various protein substrates and be involved in a variety of cellular processes. Catalyzes the palmitoylation of KCNMA1, regulating localization of KCNMA1 to the plasma membrane. Might also mediate palmitoylation of CNN3. The polypeptide is Palmitoyltransferase ZDHHC22 (Rattus norvegicus (Rat)).